The primary structure comprises 103 residues: Matrix Gla protein (103 aa).

An N-terminal signal peptide occupies residues 1–19 (MKSLILLAILAALAVVTLC). A 4-carboxyglutamate modification is found at E21. S22, S25, and S28 each carry phosphoserine. One can recognise a Gla domain in the interval 51–97 (RAKVQERIRERSKPVHELNREACDDYRLCERYAMVYGYNAAYNRYFR). A 4-carboxyglutamate mark is found at E56, E60, E67, and E71. A disulfide bridge links C73 with C79. A propeptide spans 97–103 (RKRRGTK) (removed in mature form; probably by carboxypeptidase N).

It belongs to the osteocalcin/matrix Gla protein family. Post-translationally, requires vitamin K-dependent gamma-carboxylation for its function.

It is found in the secreted. Functionally, associates with the organic matrix of bone and cartilage. Thought to act as an inhibitor of bone formation. The sequence is that of Matrix Gla protein (MGP) from Homo sapiens (Human).